We begin with the raw amino-acid sequence, 814 residues long: Valine--tRNA ligase (814 aa).

Positions 46-56 (PTVSGQLHIGH) match the 'HIGH' region motif. The 'KMSKS' region signature appears at 536–540 (KMSKS). Position 539 (Lys539) interacts with ATP.

Belongs to the class-I aminoacyl-tRNA synthetase family. ValS type 2 subfamily. As to quaternary structure, monomer.

The protein localises to the cytoplasm. It carries out the reaction tRNA(Val) + L-valine + ATP = L-valyl-tRNA(Val) + AMP + diphosphate. In terms of biological role, catalyzes the attachment of valine to tRNA(Val). As ValRS can inadvertently accommodate and process structurally similar amino acids such as threonine, to avoid such errors, it has a 'posttransfer' editing activity that hydrolyzes mischarged Thr-tRNA(Val) in a tRNA-dependent manner. The protein is Valine--tRNA ligase of Rickettsia prowazekii (strain Madrid E).